The sequence spans 200 residues: dITP/XTP pyrophosphatase (200 aa).

8–13 (TGNQGK) is a binding site for substrate. Catalysis depends on aspartate 69, which acts as the Proton acceptor. Aspartate 69 lines the Mg(2+) pocket. Residues serine 70, 154–157 (FGYD), lysine 177, and 182–183 (HR) each bind substrate.

The protein belongs to the HAM1 NTPase family. Homodimer. Mg(2+) serves as cofactor.

The catalysed reaction is XTP + H2O = XMP + diphosphate + H(+). It catalyses the reaction dITP + H2O = dIMP + diphosphate + H(+). The enzyme catalyses ITP + H2O = IMP + diphosphate + H(+). Pyrophosphatase that catalyzes the hydrolysis of nucleoside triphosphates to their monophosphate derivatives, with a high preference for the non-canonical purine nucleotides XTP (xanthosine triphosphate), dITP (deoxyinosine triphosphate) and ITP. Seems to function as a house-cleaning enzyme that removes non-canonical purine nucleotides from the nucleotide pool, thus preventing their incorporation into DNA/RNA and avoiding chromosomal lesions. This Vibrio cholerae serotype O1 (strain ATCC 39315 / El Tor Inaba N16961) protein is dITP/XTP pyrophosphatase.